The following is a 356-amino-acid chain: Dihydroorotate dehydrogenase (quinone) (356 aa).

FMN is bound by residues 66–70 and Thr90; that span reads AGFDK. Lys70 is a binding site for substrate. 115–119 is a binding site for substrate; the sequence is NRMGF. Residues Asn143 and Asn176 each contribute to the FMN site. Asn176 lines the substrate pocket. Ser179 serves as the catalytic Nucleophile. Residue Asn181 coordinates substrate. Positions 212 and 240 each coordinate FMN. 241–242 serves as a coordination point for substrate; sequence NT. FMN is bound by residues Gly264, Gly293, and 314–315; that span reads YT.

Belongs to the dihydroorotate dehydrogenase family. Type 2 subfamily. In terms of assembly, monomer. FMN is required as a cofactor.

It is found in the cell membrane. It carries out the reaction (S)-dihydroorotate + a quinone = orotate + a quinol. The protein operates within pyrimidine metabolism; UMP biosynthesis via de novo pathway; orotate from (S)-dihydroorotate (quinone route): step 1/1. Functionally, catalyzes the conversion of dihydroorotate to orotate with quinone as electron acceptor. This is Dihydroorotate dehydrogenase (quinone) (pyrD) from Mycobacterium leprae (strain TN).